Reading from the N-terminus, the 39-residue chain is Potassium channel toxin alpha-KTx 2.23 (39 aa).

3 disulfides stabilise this stretch: Cys-7-Cys-29, Cys-13-Cys-34, and Cys-17-Cys-36.

Expressed by the venom gland.

The protein resides in the secreted. Its function is as follows. Blocks human voltage-gated potassium (Kv) channels Kv1.1/KCNA1, Kv1.2/KCNA2 and Kv1.3/KCNA3. This Centruroides bonito (Scorpion) protein is Potassium channel toxin alpha-KTx 2.23.